The primary structure comprises 374 residues: Pectate lyase 3 (374 aa).

The N-terminal stretch at 1 to 22 is a signal peptide; it reads MKYLLPSAAAGLLLLAAQPTMA. Residues C93 and C176 are joined by a disulfide bond. D150, D152, E187, and D191 together coordinate Ca(2+). The active site involves R239. C350 and C373 are joined by a disulfide.

This sequence belongs to the polysaccharide lyase 1 family. PLADES subfamily. Ca(2+) is required as a cofactor.

The protein resides in the secreted. The catalysed reaction is Eliminative cleavage of (1-&gt;4)-alpha-D-galacturonan to give oligosaccharides with 4-deoxy-alpha-D-galact-4-enuronosyl groups at their non-reducing ends.. It participates in glycan metabolism; pectin degradation; 2-dehydro-3-deoxy-D-gluconate from pectin: step 2/5. Involved in maceration and soft-rotting of plant tissue. This Pectobacterium carotovorum (Erwinia carotovora) protein is Pectate lyase 3 (pel3).